The sequence spans 331 residues: MDGNHSGGLGLVGDIGGTNARFALVEFDGQDPRLIEPTAYRGEDYGTAEDAIEEYLRKVGVKHPDQAVVAVAGPIDHGQVHMTNLDWRISEDGLRRAGGFRNAKLINDFTAQALAAPRVGPKDLRQIGELPTSGEGDLAILGPGTGFGVAGLVRRHGQEIPLATEGGHVAFAPVDDVEIEVLRALTRRLDGGRVSVERILSGPGMEDLHVDLAAAEGRGVEALTAKQITERAVEGCADSLATVNRFCAILGSTAGDIALTLGARGGVFIAGGIAPRIIDILEKSPFRERFDSKGRLSGFTRSIPTHVILHPHTALIGAAVALTPEGRAAVS.

Residue Gly13–Thr18 coordinates ATP.

Belongs to the bacterial glucokinase family.

It localises to the cytoplasm. The enzyme catalyses D-glucose + ATP = D-glucose 6-phosphate + ADP + H(+). The chain is Glucokinase from Caulobacter vibrioides (strain ATCC 19089 / CIP 103742 / CB 15) (Caulobacter crescentus).